We begin with the raw amino-acid sequence, 860 residues long: Late endosome and vacuole interface protein 11 (860 aa).

The tract at residues 19–45 (EIINNSDHSSSHSTSHEEEDEEEDDTE) is disordered. Positions 20–31 (IINNSDHSSSHS) are enriched in low complexity. A compositionally biased stretch (acidic residues) spans 35-45 (EEEDEEEDDTE). The BED-type zinc finger occupies 84–138 (KNIAKFWSHFLAIEKKLTKVKCKHCGEILTRSDASLTKTFRSHLKTKHNISANKN). Residues Cys105, Cys108, His126, and His131 each contribute to the Zn(2+) site.

It belongs to the VID22 family.

The protein resides in the nucleus. Functionally, involved in vacuolar processing and morphology. This Saccharomyces cerevisiae (strain ATCC 204508 / S288c) (Baker's yeast) protein is Late endosome and vacuole interface protein 11 (ENV11).